Here is a 432-residue protein sequence, read N- to C-terminus: Major royal jelly protein 1 (432 aa).

The signal sequence occupies residues 1–19; that stretch reads MTRLFMLVCLGIVCQGTTG. Asn-28, Asn-144, and Asn-177 each carry an N-linked (GlcNAc...) asparagine glycan. 3 cysteine pairs are disulfide-bonded: Cys-118–Cys-150, Cys-132–Cys-195, and Cys-329–Cys-416. 24-methylenecholesterol is bound at residue Pro-364. A Histidine amide; atypical modification is found at His-431. Leucine amide; atypical is present on Leu-432.

Belongs to the major royal jelly protein family. In terms of assembly, is present in royal jelly in different forms: monomer (55 kDa), oligomeric subunit (ca. 287-420 kDa), and water-insoluble aggregates in sediment after interaction with fatty acids. Component of the apisin heterooligomer complex consisting of 4 copies of MRJP1 and 4 copies of apisimin, associated with 8 molecules of 24-methylenecholesterol; apisimin forms a bridge connecting two MRJP1 dimers. At low pH multiple apisin octamers stack to form filaments that increase the viscosity of royal jelly; these filaments may be stabilized by bound fatty acid chains. The mandibular gland, where royal jelly is produced, has low pH conditions favouring filament formation, while the higher pH of the insect midgut favors filament disassembly. Post-translationally, N-glycosylated on Asn-28, Asn-144 and Asn-177. Glycosylation is required to prevent apisin multimers from aggregating. In terms of processing, jellein-2 is probably processed to yield jellein-1 and jellein-4. In terms of tissue distribution, found in and secreted from the hypopharyngeal glands of the worker honey bee (at protein level); expression peaks at 12 days post eclosion. Expressed in the brains of worker bees (at protein level); found in antennal lobe, optical lobe and a subpopulation of Kenyon cells in the mushroom body. Found in the ommatidia of worker bees (at protein level). Expressed in the spermatheca of adult queen bees (at protein level); expression levels are higher in mated queens than in virgin queens. Expressed in queen bee ovaries and male drone testes.

Its subcellular location is the secreted. The protein resides in the cytoplasm. The protein localises to the cell projection. It is found in the rhabdomere. It localises to the cytoskeleton. Functionally, most abundant protein component of royal jelly, a substance produced in the hypopharyngeal gland containing proteins, free amino acids, fatty acids, sugars and other nutrients, which is fed to developing larvae by worker nurse bees. Major royal jelly proteins (Mrjps) are high in essential amino acids and probably have a nutritional function in larval food. All larvae are fed some royal jelly (also known as worker jelly) early in their development but it forms the principal source of nutrition for larvae destined to become queen bees. Induces the differentiation of honey bee larvae into queens through an Egfr-mediated signaling pathway. Promotes body size increase by activating p70 S6 kinase, stimulates ovary development by augmenting the titer of vitellogenin (Vg) and juvenile hormone, and reduces developmental time by increasing the activity of mitogen-activated protein kinase and inducing 20-hydroxyecdysone (ecdysterone, 20E) production. Together with apisimin forms the apisin complex that polymerizes at low pH, forming a fiber network and increasing the viscosity of royal jelly. The viscous royal Jelly placed in honeycomb cells containing larvae destined to become queens acts as both a food supply and an adhesive preventing larvae from falling out; queens are reared in special large cells oriented vertically. Produced in the spermatheca of adult queen bees, along with other major royal jelly proteins, where it may act as a nutrient supply for sperm stored by mated queens, or be involved in energy metabolism. Has antibacterial activity against the Gram-positive bacteria S.aureus ATCC 6535, S.saprophyticus and B.subtilis CCT2471, and the Gram-negative bacteria E.coli CCT1371, E.cloacae ATCC 23355, K.pneumoniae ATCC 13883 and P.aeruginosa ATCC 27853, and antifungal activity against C.albicans. Lack cytolytic activity and does not induce rat peritoneal mast cell degranulation. In terms of biological role, lacks antibacterial and antifungal activity. Lacks cytolytic activity and does not induce rat peritoneal mast cell degranulation. This Apis mellifera (Honeybee) protein is Major royal jelly protein 1.